A 636-amino-acid polypeptide reads, in one-letter code: Threonine--tRNA ligase (636 aa).

The TGS domain occupies M1 to T61. The catalytic stretch occupies residues D238–P528. Zn(2+) is bound by residues C329, H380, and H505.

The protein belongs to the class-II aminoacyl-tRNA synthetase family. As to quaternary structure, homodimer. Requires Zn(2+) as cofactor.

Its subcellular location is the cytoplasm. The enzyme catalyses tRNA(Thr) + L-threonine + ATP = L-threonyl-tRNA(Thr) + AMP + diphosphate + H(+). Functionally, catalyzes the attachment of threonine to tRNA(Thr) in a two-step reaction: L-threonine is first activated by ATP to form Thr-AMP and then transferred to the acceptor end of tRNA(Thr). Also edits incorrectly charged L-seryl-tRNA(Thr). The sequence is that of Threonine--tRNA ligase from Desulforapulum autotrophicum (strain ATCC 43914 / DSM 3382 / VKM B-1955 / HRM2) (Desulfobacterium autotrophicum).